We begin with the raw amino-acid sequence, 556 residues long: 2-succinyl-5-enolpyruvyl-6-hydroxy-3-cyclohexene-1-carboxylate synthase (556 aa).

The protein belongs to the TPP enzyme family. MenD subfamily. In terms of assembly, homodimer. Mg(2+) serves as cofactor. Mn(2+) is required as a cofactor. It depends on thiamine diphosphate as a cofactor.

The catalysed reaction is isochorismate + 2-oxoglutarate + H(+) = 5-enolpyruvoyl-6-hydroxy-2-succinyl-cyclohex-3-ene-1-carboxylate + CO2. It participates in quinol/quinone metabolism; 1,4-dihydroxy-2-naphthoate biosynthesis; 1,4-dihydroxy-2-naphthoate from chorismate: step 2/7. It functions in the pathway quinol/quinone metabolism; menaquinone biosynthesis. Functionally, catalyzes the thiamine diphosphate-dependent decarboxylation of 2-oxoglutarate and the subsequent addition of the resulting succinic semialdehyde-thiamine pyrophosphate anion to isochorismate to yield 2-succinyl-5-enolpyruvyl-6-hydroxy-3-cyclohexene-1-carboxylate (SEPHCHC). The polypeptide is 2-succinyl-5-enolpyruvyl-6-hydroxy-3-cyclohexene-1-carboxylate synthase (Salmonella paratyphi C (strain RKS4594)).